A 181-amino-acid polypeptide reads, in one-letter code: Adenine phosphoribosyltransferase (181 aa).

The protein belongs to the purine/pyrimidine phosphoribosyltransferase family. Homodimer.

Its subcellular location is the cytoplasm. The catalysed reaction is AMP + diphosphate = 5-phospho-alpha-D-ribose 1-diphosphate + adenine. The protein operates within purine metabolism; AMP biosynthesis via salvage pathway; AMP from adenine: step 1/1. Catalyzes a salvage reaction resulting in the formation of AMP, that is energically less costly than de novo synthesis. The protein is Adenine phosphoribosyltransferase of Vibrio parahaemolyticus serotype O3:K6 (strain RIMD 2210633).